A 545-amino-acid chain; its full sequence is Methionine--tRNA ligase (545 aa).

The 'HIGH' region motif lies at 12 to 22 (PYANGSLHIGH). The Zn(2+) site is built by cysteine 143, cysteine 146, cysteine 156, and cysteine 159. A 'KMSKS' region motif is present at residues 329–333 (KLSKS). Residue lysine 332 coordinates ATP.

It belongs to the class-I aminoacyl-tRNA synthetase family. MetG type 1 subfamily. In terms of assembly, monomer. Zn(2+) is required as a cofactor.

The protein resides in the cytoplasm. The enzyme catalyses tRNA(Met) + L-methionine + ATP = L-methionyl-tRNA(Met) + AMP + diphosphate. Its function is as follows. Is required not only for elongation of protein synthesis but also for the initiation of all mRNA translation through initiator tRNA(fMet) aminoacylation. The chain is Methionine--tRNA ligase (metG) from Buchnera aphidicola subsp. Baizongia pistaciae (strain Bp).